The sequence spans 104 residues: Phosphoribosyl-ATP pyrophosphatase (104 aa).

Belongs to the PRA-PH family.

It localises to the cytoplasm. It catalyses the reaction 1-(5-phospho-beta-D-ribosyl)-ATP + H2O = 1-(5-phospho-beta-D-ribosyl)-5'-AMP + diphosphate + H(+). The protein operates within amino-acid biosynthesis; L-histidine biosynthesis; L-histidine from 5-phospho-alpha-D-ribose 1-diphosphate: step 2/9. This is Phosphoribosyl-ATP pyrophosphatase from Streptococcus thermophilus (strain ATCC BAA-491 / LMD-9).